The following is a 200-amino-acid chain: ATP synthase subunit s, mitochondrial (200 aa).

A mitochondrion-targeting transit peptide spans 1–25; it reads MMLFGKISQQLCGLKKLPWSRDSRY. Residues 1-61 are N-terminal domain; that stretch reads MMLFGKISQQ…SEWLLRCGAM (61 aa). Gly59 contributes to the Mg(2+) binding site. LRR repeat units lie at residues 62–87, 88–116, 117–141, and 142–173; these read VRYH…KYKI, QAID…KIRL, CKCH…KSML, and EMEI…LSDL. Thr93 provides a ligand contact to Mg(2+).

The protein belongs to the ATP synthase subunit s family. As to quaternary structure, homotetramer. Associates with ATP synthase.

The protein localises to the mitochondrion. Its subcellular location is the mitochondrion inner membrane. Its function is as follows. Involved in regulation of mitochondrial membrane ATP synthase. Necessary for H(+) conduction of ATP synthase. Facilitates energy-driven catalysis of ATP synthesis by blocking a proton leak through an alternative proton exit pathway. This is ATP synthase subunit s, mitochondrial (DMAC2L) from Bos taurus (Bovine).